We begin with the raw amino-acid sequence, 319 residues long: MDFVLKMKDKSLKNRKLTREEGLRLFNSNLEELIKEANNIRKEIHGDGIDLCSIINGKSGRCGEDCAFCAQSKYHKTNISEYPLLDYEKIKKVAKENEDEGVHRFSIVTSGRGLYGEEFERVITYYSNLNKELKINLCASHGIINKESLIKLKKAGVKRYHHNLETSRNCYDKICKTHSYEERVKTIKNAKEAGLEVCSGGIIGLGETIIDRIDLAITLRELEIKSIPINVLSAIKGTKLQHMIPLNEEEILRTIAVFRFINPEAKIRLAGGRYLLKNFGENAFKAGANATITGNLLTTCGNKIKDDKRLIENIGMRIF.

The region spanning 44-273 (IHGDGIDLCS…EAKIRLAGGR (230 aa)) is the Radical SAM core domain. Cys62, Cys66, and Cys69 together coordinate [4Fe-4S] cluster. Residues Ser106, Cys138, Cys198, and Arg268 each coordinate [2Fe-2S] cluster.

It belongs to the radical SAM superfamily. Biotin synthase family. In terms of assembly, homodimer. It depends on [4Fe-4S] cluster as a cofactor. [2Fe-2S] cluster serves as cofactor.

It carries out the reaction (4R,5S)-dethiobiotin + (sulfur carrier)-SH + 2 reduced [2Fe-2S]-[ferredoxin] + 2 S-adenosyl-L-methionine = (sulfur carrier)-H + biotin + 2 5'-deoxyadenosine + 2 L-methionine + 2 oxidized [2Fe-2S]-[ferredoxin]. It participates in cofactor biosynthesis; biotin biosynthesis; biotin from 7,8-diaminononanoate: step 2/2. Functionally, catalyzes the conversion of dethiobiotin (DTB) to biotin by the insertion of a sulfur atom into dethiobiotin via a radical-based mechanism. The polypeptide is Biotin synthase (Clostridium perfringens (strain ATCC 13124 / DSM 756 / JCM 1290 / NCIMB 6125 / NCTC 8237 / Type A)).